A 301-amino-acid chain; its full sequence is Homoserine kinase (301 aa).

An ATP-binding site is contributed by 89–99 (KPGSGLGSSSA).

It belongs to the GHMP kinase family. Homoserine kinase subfamily.

The protein resides in the cytoplasm. The catalysed reaction is L-homoserine + ATP = O-phospho-L-homoserine + ADP + H(+). Its pathway is amino-acid biosynthesis; L-threonine biosynthesis; L-threonine from L-aspartate: step 4/5. In terms of biological role, catalyzes the ATP-dependent phosphorylation of L-homoserine to L-homoserine phosphate. This is Homoserine kinase from Methanococcus maripaludis (strain C5 / ATCC BAA-1333).